A 708-amino-acid polypeptide reads, in one-letter code: Assimilatory nitrate reductase (708 aa).

In terms of domain architecture, 4Fe-4S Mo/W bis-MGD-type spans 15–73 (TKQVPTTCMRCAVGCGHVHLGSENAYGLETVRGDPSHPVNNGLACGRGIRESADPAGEW). [4Fe-4S] cluster-binding residues include Cys-22, Cys-25, Cys-29, and Cys-59. The disordered stretch occupies residues 586 to 613 (TTGREADGYNTGVRSRSDTPEEPVARVN).

The protein belongs to the prokaryotic molybdopterin-containing oxidoreductase family. NasA/NapA/NarB subfamily. Is probably a monomer. Initially characterized as a dimer of proteins with a MW of 105 and 50 kDa. It depends on [4Fe-4S] cluster as a cofactor. Mo-bis(molybdopterin guanine dinucleotide) is required as a cofactor.

It is found in the cytoplasm. The enzyme catalyses nitrite + 2 oxidized [2Fe-2S]-[ferredoxin] + H2O = nitrate + 2 reduced [2Fe-2S]-[ferredoxin] + 2 H(+). Its pathway is nitrogen metabolism; nitrate reduction (assimilation). Its activity is regulated as follows. Inhibited by cyanide and azide. In terms of biological role, nitrate reductase is a key enzyme involved in the first step of nitrate assimilation. Catalyzes the reduction of nitrate to nitrite, using ferredoxin as the electron donor. Can use reduced methyl viologen but neither NADPH nor NADH as electron donors. This is Assimilatory nitrate reductase from Haloferax mediterranei (strain ATCC 33500 / DSM 1411 / JCM 8866 / NBRC 14739 / NCIMB 2177 / R-4) (Halobacterium mediterranei).